Consider the following 898-residue polypeptide: Aconitate hydratase 1 (898 aa).

Ala2 carries the post-translational modification N-acetylalanine. Residues Gln90 and 209–211 (DSH) contribute to the substrate site. Cys441, Cys507, and Cys510 together coordinate [4Fe-4S] cluster. Substrate contacts are provided by residues Arg540, Arg545, Arg703, and 784–785 (SR).

This sequence belongs to the aconitase/IPM isomerase family. In terms of assembly, monomer. [4Fe-4S] cluster is required as a cofactor. As to expression, mostly expressed in roots, stems and leaves, also present in stems and flowers.

It localises to the cytoplasm. The protein localises to the mitochondrion. The enzyme catalyses citrate = D-threo-isocitrate. Its pathway is carbohydrate metabolism; tricarboxylic acid cycle; isocitrate from oxaloacetate: step 2/2. In terms of biological role, catalyzes the isomerization of citrate to isocitrate via cis-aconitate. Contributes to oxidative stress tolerance. May have a role in respiration. This chain is Aconitate hydratase 1, found in Arabidopsis thaliana (Mouse-ear cress).